The chain runs to 279 residues: Tryptophan synthase alpha chain (279 aa).

Active-site proton acceptor residues include glutamate 50 and aspartate 61.

Belongs to the TrpA family. Tetramer of two alpha and two beta chains.

It carries out the reaction (1S,2R)-1-C-(indol-3-yl)glycerol 3-phosphate + L-serine = D-glyceraldehyde 3-phosphate + L-tryptophan + H2O. Its pathway is amino-acid biosynthesis; L-tryptophan biosynthesis; L-tryptophan from chorismate: step 5/5. The alpha subunit is responsible for the aldol cleavage of indoleglycerol phosphate to indole and glyceraldehyde 3-phosphate. The protein is Tryptophan synthase alpha chain of Rhizobium rhizogenes (strain K84 / ATCC BAA-868) (Agrobacterium radiobacter).